Reading from the N-terminus, the 244-residue chain is Phosphoadenosine 5'-phosphosulfate reductase (244 aa).

Cys-239 functions as the Nucleophile; cysteine thiosulfonate intermediate in the catalytic mechanism.

Belongs to the PAPS reductase family. CysH subfamily.

The protein localises to the cytoplasm. It catalyses the reaction [thioredoxin]-disulfide + sulfite + adenosine 3',5'-bisphosphate + 2 H(+) = [thioredoxin]-dithiol + 3'-phosphoadenylyl sulfate. Its pathway is sulfur metabolism; hydrogen sulfide biosynthesis; sulfite from sulfate: step 3/3. In terms of biological role, catalyzes the formation of sulfite from phosphoadenosine 5'-phosphosulfate (PAPS) using thioredoxin as an electron donor. This chain is Phosphoadenosine 5'-phosphosulfate reductase, found in Shigella dysenteriae serotype 1 (strain Sd197).